The primary structure comprises 158 residues: Transcription elongation factor GreA (158 aa).

Belongs to the GreA/GreB family.

Necessary for efficient RNA polymerase transcription elongation past template-encoded arresting sites. The arresting sites in DNA have the property of trapping a certain fraction of elongating RNA polymerases that pass through, resulting in locked ternary complexes. Cleavage of the nascent transcript by cleavage factors such as GreA or GreB allows the resumption of elongation from the new 3'terminus. GreA releases sequences of 2 to 3 nucleotides. The polypeptide is Transcription elongation factor GreA (Yersinia pestis).